Reading from the N-terminus, the 237-residue chain is Phosphoribosylaminoimidazole-succinocarboxamide synthase (237 aa).

The protein belongs to the SAICAR synthetase family.

The catalysed reaction is 5-amino-1-(5-phospho-D-ribosyl)imidazole-4-carboxylate + L-aspartate + ATP = (2S)-2-[5-amino-1-(5-phospho-beta-D-ribosyl)imidazole-4-carboxamido]succinate + ADP + phosphate + 2 H(+). The protein operates within purine metabolism; IMP biosynthesis via de novo pathway; 5-amino-1-(5-phospho-D-ribosyl)imidazole-4-carboxamide from 5-amino-1-(5-phospho-D-ribosyl)imidazole-4-carboxylate: step 1/2. The polypeptide is Phosphoribosylaminoimidazole-succinocarboxamide synthase (Shigella sonnei (strain Ss046)).